We begin with the raw amino-acid sequence, 445 residues long: Mutanase Pc12g07500 (445 aa).

The first 21 residues, 1–21 (MIWKSLFSALAILTHILPALT), serve as a signal peptide directing secretion. Asn386 and Asn437 each carry an N-linked (GlcNAc...) asparagine glycan.

The protein belongs to the glycosyl hydrolase 71 family. In terms of assembly, monomer.

It localises to the secreted. The catalysed reaction is Endohydrolysis of (1-&gt;3)-alpha-D-glucosidic linkages in isolichenin, pseudonigeran and nigeran.. Functionally, hydrolyzes 1,3-alpha-glucan predominantly into pentasaccharides. May enhance the efficacy of fungal antibiotics by degrading bacterial exopolysaccharides. This is Mutanase Pc12g07500 from Penicillium rubens (strain ATCC 28089 / DSM 1075 / NRRL 1951 / Wisconsin 54-1255) (Penicillium chrysogenum).